We begin with the raw amino-acid sequence, 187 residues long: Ribosome-recycling factor (187 aa).

It belongs to the RRF family.

The protein resides in the cytoplasm. Responsible for the release of ribosomes from messenger RNA at the termination of protein biosynthesis. May increase the efficiency of translation by recycling ribosomes from one round of translation to another. The chain is Ribosome-recycling factor from Mycoplasmopsis pulmonis (strain UAB CTIP) (Mycoplasma pulmonis).